A 110-amino-acid polypeptide reads, in one-letter code: MANAHDTHHEGNHGSVKSYMIGFILSIILTAIPFGLAMSPSLPKNLTVLIIVAMAVIQVVVHLVYFLHMDRSKEQRNNVWTFLFTTLVIALLVGLSLWIMFSIHFEMLAK.

Residues 1–18 (MANAHDTHHEGNHGSVKS) lie on the Cytoplasmic side of the membrane. The chain crosses the membrane as a helical span at residues 19–39 (YMIGFILSIILTAIPFGLAMS). At 40-46 (PSLPKNL) the chain is on the periplasmic side. The helical transmembrane segment at 47–67 (TVLIIVAMAVIQVVVHLVYFL) threads the bilayer. The Cytoplasmic segment spans residues 68-78 (HMDRSKEQRNN). The chain crosses the membrane as a helical span at residues 79 to 99 (VWTFLFTTLVIALLVGLSLWI). Residues 100–110 (MFSIHFEMLAK) lie on the Periplasmic side of the membrane.

It belongs to the cytochrome c oxidase bacterial subunit 4 family. Heterooctamer of two A chains, two B chains, two C chains and two D chains.

The protein resides in the cell inner membrane. Cytochrome bo(3) ubiquinol terminal oxidase is the component of the aerobic respiratory chain of E.coli that predominates when cells are grown at high aeration. Has proton pump activity across the membrane in addition to electron transfer, pumping 2 protons/electron. The protein is Cytochrome bo(3) ubiquinol oxidase subunit 4 (cyoD) of Pseudomonas putida (Arthrobacter siderocapsulatus).